Reading from the N-terminus, the 206-residue chain is MRPGRLRLLVGLGNPGSKYVGTRHNIGFMALDKLAAQKSVSFRPQTKFHGLMAEVAVGSERVRLLMPQTYMNESGRAIRAAIDWFGLEVDQLLVLVDDMDLSLGRLRLRAQGSAGGHNGLRSAIQHLGTQDFCRLRIGIGAPGCTSEERRARTVSHVLGVFSRQESLLVDQVLDEVLMGLDLIQCLGLERAGNRLNAFQPEGCSAC.

TRNA is bound at residue Tyr19. The active-site Proton acceptor is His24. Positions 70, 72, and 118 each coordinate tRNA.

This sequence belongs to the PTH family. In terms of assembly, monomer.

Its subcellular location is the cytoplasm. It carries out the reaction an N-acyl-L-alpha-aminoacyl-tRNA + H2O = an N-acyl-L-amino acid + a tRNA + H(+). Functionally, hydrolyzes ribosome-free peptidyl-tRNAs (with 1 or more amino acids incorporated), which drop off the ribosome during protein synthesis, or as a result of ribosome stalling. Catalyzes the release of premature peptidyl moieties from peptidyl-tRNA molecules trapped in stalled 50S ribosomal subunits, and thus maintains levels of free tRNAs and 50S ribosomes. The polypeptide is Peptidyl-tRNA hydrolase (Prochlorococcus marinus (strain MIT 9313)).